We begin with the raw amino-acid sequence, 259 residues long: MLVVVSPAKNLDFESDIPVKQFTQPAMLEDTEKLMEVCRTLSPADLSSLMKISDKLATLNANRFAEFTTPFTPDNARQAMYAFNGDVYTGLDAYSLDSDTVAYAQKHLRILSGLYGLLRPLDLMQAYRLEMGTKLANPEGKDLYAFWDDRITYVLNKALEAQGDNVLINLASNEYFKAVKKKSLDGMIITPTFKDCKNGQYKIISFFAKKARGLMARYILENRVEDVEGLKNFDVDGYVFSEEQSSSTELVYLRNQESE.

This sequence belongs to the UPF0246 family.

The sequence is that of UPF0246 protein MADE_1015435 from Alteromonas mediterranea (strain DSM 17117 / CIP 110805 / LMG 28347 / Deep ecotype).